The following is a 212-amino-acid chain: Synaptosomal-associated protein 25 (212 aa).

T-SNARE coiled-coil homology domains are found at residues 26–88 (QGVA…LSGM) and 148–210 (DARE…AHQL).

Belongs to the SNAP-25 family. Exclusively found in brain and ganglia.

The protein localises to the synapse. It is found in the synaptosome. Its function is as follows. May play an important role in the synaptic function of specific neuronal systems. Associates with proteins involved in vesicle docking and membrane fusion. In Drosophila melanogaster (Fruit fly), this protein is Synaptosomal-associated protein 25 (Snap25).